Consider the following 263-residue polypeptide: Protein YpjB (263 aa).

The segment covering 233-244 (DFDDSSSEDDPV) has biased composition (acidic residues). The tract at residues 233 to 263 (DFDDSSSEDDPVENSPVVTSPVVSSSKSSFQ) is disordered. Low complexity predominate over residues 245 to 263 (ENSPVVTSPVVSSSKSSFQ).

The polypeptide is Protein YpjB (ypjB) (Escherichia coli (strain K12)).